The primary structure comprises 151 residues: Large ribosomal subunit protein eL19 (151 aa).

A disordered region spans residues 62 to 93; sequence RLKERRKKRSLKSEGKKSGSRKGKKGARANSK. The span at 79-88 shows a compositional bias: basic residues; the sequence is SGSRKGKKGA.

The protein belongs to the eukaryotic ribosomal protein eL19 family. As to quaternary structure, part of the 50S ribosomal subunit.

Functionally, binds to the 23S rRNA. This Saccharolobus solfataricus (strain ATCC 35092 / DSM 1617 / JCM 11322 / P2) (Sulfolobus solfataricus) protein is Large ribosomal subunit protein eL19.